The chain runs to 332 residues: DNA-directed RNA polymerase subunit alpha (332 aa).

The segment at 1 to 234 (MTVTISQVLR…DQLSVFGDFT (234 aa)) is alpha N-terminal domain (alpha-NTD). An alpha C-terminal domain (alpha-CTD) region spans residues 248–332 (VDPVLLRPID…PGVSQYGMLG (85 aa)).

The protein belongs to the RNA polymerase alpha chain family. As to quaternary structure, homodimer. The RNAP catalytic core consists of 2 alpha, 1 beta, 1 beta' and 1 omega subunit. When a sigma factor is associated with the core the holoenzyme is formed, which can initiate transcription.

The enzyme catalyses RNA(n) + a ribonucleoside 5'-triphosphate = RNA(n+1) + diphosphate. DNA-dependent RNA polymerase catalyzes the transcription of DNA into RNA using the four ribonucleoside triphosphates as substrates. This is DNA-directed RNA polymerase subunit alpha from Xylella fastidiosa (strain M12).